We begin with the raw amino-acid sequence, 884 residues long: Probable DNA-directed RNA polymerase subunit beta (884 aa).

This sequence belongs to the RNA polymerase beta chain family.

It catalyses the reaction RNA(n) + a ribonucleoside 5'-triphosphate = RNA(n+1) + diphosphate. In terms of biological role, required for late and very late gene expression. May be a component of the novel RNA polymerase activity induced by baculovirus infection. The protein is Probable DNA-directed RNA polymerase subunit beta (LEF-8) of Orgyia pseudotsugata multicapsid polyhedrosis virus (OpMNPV).